The following is a 429-amino-acid chain: Ribosomal RNA small subunit methyltransferase B (429 aa).

Residues 254–260, Asp277, Asp303, and Asp322 contribute to the S-adenosyl-L-methionine site; that span reads CAAPGGK. The active-site Nucleophile is the Cys375.

This sequence belongs to the class I-like SAM-binding methyltransferase superfamily. RsmB/NOP family.

It localises to the cytoplasm. It catalyses the reaction cytidine(967) in 16S rRNA + S-adenosyl-L-methionine = 5-methylcytidine(967) in 16S rRNA + S-adenosyl-L-homocysteine + H(+). Functionally, specifically methylates the cytosine at position 967 (m5C967) of 16S rRNA. This is Ribosomal RNA small subunit methyltransferase B from Shigella flexneri.